Reading from the N-terminus, the 473-residue chain is Putative BTB/POZ domain-containing protein R765 (473 aa).

A BTB domain is found at 2 to 72; the sequence is TNIQLVIKDD…KIYDREITAD (71 aa).

This sequence belongs to the mimivirus BTB/WD family.

This Acanthamoeba polyphaga mimivirus (APMV) protein is Putative BTB/POZ domain-containing protein R765.